Consider the following 414-residue polypeptide: Poly(3-hydroxyalkanoate) depolymerase C (414 aa).

The first 37 residues, 1–37 (MLAKQIKKANSRSTLLRKSLLFAAPIILAVSSSSVYA), serve as a signal peptide directing secretion. Ser154 acts as the Charge relay system in catalysis.

This sequence belongs to the AB hydrolase superfamily. Lipase family.

Its subcellular location is the secreted. In terms of biological role, specific for poly(hydroxyalkanoic acid) consisting of monomers of four or five carbon atoms and for P-nitrophenylbutyrate as substrates. The chain is Poly(3-hydroxyalkanoate) depolymerase C (phaZ1) from Paucimonas lemoignei (Pseudomonas lemoignei).